Consider the following 99-residue polypeptide: Malonate decarboxylase acyl carrier protein (99 aa).

The residue at position 25 (serine 25) is an O-(phosphoribosyl dephospho-coenzyme A)serine.

The protein belongs to the MdcC family. In terms of processing, covalently binds the prosthetic group of malonate decarboxylase.

It is found in the cytoplasm. Its function is as follows. Subunit of malonate decarboxylase, it is an acyl carrier protein to which acetyl and malonyl thioester residues are bound via a 2'-(5''-phosphoribosyl)-3'-dephospho-CoA prosthetic group and turn over during the catalytic mechanism. The chain is Malonate decarboxylase acyl carrier protein from Azotobacter vinelandii (strain DJ / ATCC BAA-1303).